The following is a 117-amino-acid chain: uncharacterized protein (117 aa).

The N-terminal stretch at 1-22 is a signal peptide; sequence MHVKYLAGIVGAALLMAGCSSS.

This is an uncharacterized protein from Escherichia coli O6:H1 (strain CFT073 / ATCC 700928 / UPEC).